A 62-amino-acid chain; its full sequence is Large ribosomal subunit protein bL28 (62 aa).

It belongs to the bacterial ribosomal protein bL28 family.

The polypeptide is Large ribosomal subunit protein bL28 (Staphylococcus epidermidis (strain ATCC 12228 / FDA PCI 1200)).